The sequence spans 356 residues: MDTSRKIIHIDMDAFYASVEQRDHPEFRGKPLIIGGDPNKRGVVATCSYEARKFGVHSAMPTRQAAKLCPNGIFIHGNMAHYVEVSNQIREIFSRYTDIIEPLSLDEAYLDVTENKKGMKSATMVAREIQQTIYQELGLTASAGVSFNKFIAKIASDFKKPAGITVVTPEEAEAFLEQIPVTKFYGVGKVTAEKLHRLGIETGADLKKWSEWDLIRELHKHGYHLYRHVRGRSNNIVNPHRDRKSVGKETTFEFNVLDSRVLEQSLMQFAKKVEERLIKLQKHGKTVVLKLRYSDFTTITKRLTLNEYTNDTSQIYQAAALLLRESYTGQDSIRLIGLTVTNLKPVYFENLRLEGL.

Residues Met1 to Gly188 enclose the UmuC domain. Mg(2+)-binding residues include Asp11 and Asp106. Glu107 is an active-site residue.

It belongs to the DNA polymerase type-Y family. Monomer. The cofactor is Mg(2+).

The protein resides in the cytoplasm. The catalysed reaction is DNA(n) + a 2'-deoxyribonucleoside 5'-triphosphate = DNA(n+1) + diphosphate. In terms of biological role, poorly processive, error-prone DNA polymerase involved in untargeted mutagenesis. Copies undamaged DNA at stalled replication forks, which arise in vivo from mismatched or misaligned primer ends. These misaligned primers can be extended by PolIV. Exhibits no 3'-5' exonuclease (proofreading) activity. May be involved in translesional synthesis, in conjunction with the beta clamp from PolIII. In Listeria monocytogenes serotype 4b (strain F2365), this protein is DNA polymerase IV.